Reading from the N-terminus, the 72-residue chain is Large ribosomal subunit protein bL31 (72 aa).

Zn(2+) contacts are provided by Cys-16, Cys-18, Cys-38, and Cys-41.

It belongs to the bacterial ribosomal protein bL31 family. Type A subfamily. In terms of assembly, part of the 50S ribosomal subunit. Requires Zn(2+) as cofactor.

Its function is as follows. Binds the 23S rRNA. The protein is Large ribosomal subunit protein bL31 of Vibrio cholerae serotype O1 (strain ATCC 39541 / Classical Ogawa 395 / O395).